The following is a 535-amino-acid chain: MGHQEELKPEQVDLKVTPFVGYLRRTWSDFCATSSIHGLKYTRDEDTNKIVHLVWLLISVVMFICAVVMARTFYMDYRSSPTRMNVESDNTPVNRLYFPPVTICPDVLFNMQKSEAFLNTLRLPKGAELRGILRKLHIFYGFMLDDERYSAEDIEQMEALLFLNNLTIPEFVEHLRWNCDEILYRCRFNGEIMDCSKIFQLSKTFFGHCCSFNLRQKGWVNNKLNNLESFKVFHLNSLNFTAQRAIGGLRYGLSVVVRYKDDNYDPLQSYSYGVKLLIQEADAFPSAHSAAKFIAFNSETFAAVRPQETFCSSAVKALIIEERNCVFQNEFPMRYFSDYVYPNCELNCRVTNMVKFCGCHTYFFDFNRTSDRICTFRDIPCLVDNFANIITRKKSTQCYCPLTCEHIDYDVQLTNFPLELNMPVADKFYSGLAKNDGVLHVFINSFSYRRLRRDLLSNMVTLVSNLGSAFSLFVGMSMLSVVEIIYYFSVILRKNYKLECETRSQMLHKKPKFAWPKANDTHSKEQKSVFIIHKS.

Topologically, residues 1–49 are cytoplasmic; it reads MGHQEELKPEQVDLKVTPFVGYLRRTWSDFCATSSIHGLKYTRDEDTNK. The chain crosses the membrane as a helical span at residues 50–70; that stretch reads IVHLVWLLISVVMFICAVVMA. Over 71–471 the chain is Extracellular; the sequence is RTFYMDYRSS…LVSNLGSAFS (401 aa). N-linked (GlcNAc...) asparagine glycans are attached at residues N165, N239, and N367. The chain crosses the membrane as a helical span at residues 472–492; sequence LFVGMSMLSVVEIIYYFSVIL. The Cytoplasmic segment spans residues 493 to 535; the sequence is RKNYKLECETRSQMLHKKPKFAWPKANDTHSKEQKSVFIIHKS.

It belongs to the amiloride-sensitive sodium channel (TC 1.A.6) family. Embryonic and larval tracheal system; dorsal trunk (but not at fusion with transverse connective), several branches and terminal cells. Also expressed in adult tracheal system; dorsal trunk, but not at the spiracles.

The protein resides in the membrane. Part of a complex that plays a role in tracheal liquid clearance. Probable role in sodium transport. In Drosophila melanogaster (Fruit fly), this protein is Sodium channel protein Nach (Nach).